Consider the following 550-residue polypeptide: Probable acyl-activating enzyme 6 (550 aa).

It belongs to the ATP-dependent AMP-binding enzyme family. Expressed at low levels in roots, leaves, stems and developing seeds.

May act as an acid--thiol ligase that activates carboxylic acids by forming acyl-CoAs. The sequence is that of Probable acyl-activating enzyme 6 (AAE6) from Arabidopsis thaliana (Mouse-ear cress).